We begin with the raw amino-acid sequence, 180 residues long: ATP-dependent protease subunit HslV (180 aa).

The active site involves threonine 8. Na(+) contacts are provided by alanine 165, cysteine 168, and threonine 171.

The protein belongs to the peptidase T1B family. HslV subfamily. In terms of assembly, a double ring-shaped homohexamer of HslV is capped on each side by a ring-shaped HslU homohexamer. The assembly of the HslU/HslV complex is dependent on binding of ATP.

The protein localises to the cytoplasm. The enzyme catalyses ATP-dependent cleavage of peptide bonds with broad specificity.. Its activity is regulated as follows. Allosterically activated by HslU binding. Its function is as follows. Protease subunit of a proteasome-like degradation complex believed to be a general protein degrading machinery. This is ATP-dependent protease subunit HslV from Macrococcus caseolyticus (strain JCSC5402) (Macrococcoides caseolyticum).